A 509-amino-acid polypeptide reads, in one-letter code: Dihydrolipoyl dehydrogenase, mitochondrial (509 aa).

A mitochondrion-targeting transit peptide spans 1-35 (MQSWSRVYCSLAKRGHFSRISHGLQAVSAVPLRTY). At Lys66 the chain carries N6-acetyllysine; alternate. Lys66 is modified (N6-succinyllysine; alternate). FAD is bound by residues 71 to 80 (EKNETLGGTC) and Lys89. Cys80 and Cys85 form a disulfide bridge. An N6-acetyllysine; alternate mark is found at Lys104, Lys122, Lys132, and Lys143. An N6-succinyllysine; alternate mark is found at Lys104, Lys122, Lys132, and Lys143. Gly154 serves as a coordination point for FAD. N6-succinyllysine occurs at positions 159 and 166. 183–185 (TGS) serves as a coordination point for FAD. Residues 220 to 227 (GAGVIGVE) and Glu243 contribute to the NAD(+) site. Lys273 and Lys277 each carry N6-succinyllysine. NAD(+) is bound at residue Val278. 2 positions are modified to phosphoserine: Ser285 and Ser297. Gly314 is a binding site for NAD(+). Lys346 carries the post-translational modification N6-acetyllysine. FAD contacts are provided by residues Asp355 and 361–364 (MLAH). Lys410 is modified (N6-acetyllysine; alternate). Lys410 is modified (N6-succinyllysine; alternate). An N6-acetyllysine mark is found at Lys417 and Lys420. N6-succinyllysine is present on Lys430. The active-site Proton acceptor is His487. Phosphoserine is present on Ser502. Position 505 is an N6-acetyllysine; alternate (Lys505). Lys505 carries the post-translational modification N6-succinyllysine; alternate.

The protein belongs to the class-I pyridine nucleotide-disulfide oxidoreductase family. As to quaternary structure, homodimer. Part of the multimeric pyruvate dehydrogenase complex that contains multiple copies of pyruvate dehydrogenase (subunits PDHA (PDHA1 or PDHA2) and PDHB, E1), dihydrolipoamide acetyltransferase (DLAT, E2) and lipoamide dehydrogenase (DLD, E3). These subunits are bound to an inner core composed of about 48 DLAT and 12 PDHX molecules (by non covalent bonds). The 2-oxoglutarate dehydrogenase complex is composed of OGDH (2-oxoglutarate dehydrogenase; E1), DLST (dihydrolipoamide succinyltransferase; E2), DLD (dihydrolipoamide dehydrogenase; E3) and the assembly factor KGD4. It contains multiple copies of the three enzymatic components (E1, E2 and E3). In the nucleus, the 2-oxoglutarate dehydrogenase complex associates with KAT2A. Interacts with PDHX. Requires FAD as cofactor. Tyrosine phosphorylated.

Its subcellular location is the mitochondrion matrix. It is found in the nucleus. The protein localises to the cell projection. The protein resides in the cilium. It localises to the flagellum. Its subcellular location is the cytoplasmic vesicle. It is found in the secretory vesicle. The protein localises to the acrosome. The enzyme catalyses N(6)-[(R)-dihydrolipoyl]-L-lysyl-[protein] + NAD(+) = N(6)-[(R)-lipoyl]-L-lysyl-[protein] + NADH + H(+). Lipoamide dehydrogenase is a component of the glycine cleavage system as well as an E3 component of three alpha-ketoacid dehydrogenase complexes (pyruvate-, alpha-ketoglutarate-, and branched-chain amino acid-dehydrogenase complex). The 2-oxoglutarate dehydrogenase complex is mainly active in the mitochondrion. A fraction of the 2-oxoglutarate dehydrogenase complex also localizes in the nucleus and is required for lysine succinylation of histones: associates with KAT2A on chromatin and provides succinyl-CoA to histone succinyltransferase KAT2A. In monomeric form may have additional moonlighting function as serine protease. Involved in the hyperactivation of spermatazoa during capacitation and in the spermatazoal acrosome reaction. This is Dihydrolipoyl dehydrogenase, mitochondrial (DLD) from Canis lupus familiaris (Dog).